The primary structure comprises 85 residues: MAHKKAGGSTNNGRDSESKRLGVKRFGGESVLAGNILVRQRGTKFHAGINVGIGKDHTLFAKATGVVKFEKKGPKMRSFITIVAE.

Residues 1–22 (MAHKKAGGSTNNGRDSESKRLG) are disordered.

This sequence belongs to the bacterial ribosomal protein bL27 family.

The chain is Large ribosomal subunit protein bL27 from Psychromonas ingrahamii (strain DSM 17664 / CCUG 51855 / 37).